The primary structure comprises 533 residues: Conglutin beta 2 (533 aa).

Positions 1–30 (MGKMRVRFPTLVLVLGIVFLMAVSIGIAYG) are cleaved as a signal peptide. Positions 31–108 (EKDVLKSHER…EQQQGSPSYS (78 aa)) are excised as a propeptide. Composition is skewed to basic and acidic residues over residues 37–51 (SHER…EWQP) and 79–99 (SGYE…REQE). 2 disordered regions span residues 37 to 123 (SHER…QRFQ) and 315 to 337 (KHAQ…LRSN). Cupin type-1 domains follow at residues 115 to 273 (YHFS…EEIQ) and 332 to 494 (FNLR…EDIE). 2 N-linked (GlcNAc...) asparagine glycosylation sites follow: Asn-363 and Asn-444. The tract at residues 503 to 533 (SYFANGQPQQQQQQQSEKEGRRGRRGSSLPF) is disordered.

It belongs to the 7S seed storage protein family. As to quaternary structure, multimers. Give rise to a complex array of processed forms, due to a large number of processing sites and changes in glycosylation.

Functionally, seed storage protein. Accumulates during seed development and is hydrolyzed after germination to provide a carbon and nitrogen source for the developing seedling. Has a lectin-like activity. The sequence is that of Conglutin beta 2 from Lupinus albus (White lupine).